Reading from the N-terminus, the 299-residue chain is Probable lipid kinase YegS-like (299 aa).

Residues 2–133 (ATFPASLLIL…IDIAQVNDKT (132 aa)) enclose the DAGKc domain. Residues T40, 66 to 72 (GDGTINE), and T95 contribute to the ATP site. Mg(2+) is bound by residues L215, D218, and L220. The active-site Proton acceptor is the E271.

It belongs to the diacylglycerol/lipid kinase family. YegS lipid kinase subfamily. The cofactor is Mg(2+). Requires Ca(2+) as cofactor.

The protein localises to the cytoplasm. In terms of biological role, probably phosphorylates lipids; the in vivo substrate is unknown. The protein is Probable lipid kinase YegS-like of Citrobacter koseri (strain ATCC BAA-895 / CDC 4225-83 / SGSC4696).